Reading from the N-terminus, the 85-residue chain is Large ribosomal subunit protein bL31 (85 aa).

The tract at residues 65-85 (YGMGGAGKAGEDKKAGDKADA) is disordered. The segment covering 73-85 (AGEDKKAGDKADA) has biased composition (basic and acidic residues).

This sequence belongs to the bacterial ribosomal protein bL31 family. Type A subfamily. As to quaternary structure, part of the 50S ribosomal subunit.

Its function is as follows. Binds the 23S rRNA. The sequence is that of Large ribosomal subunit protein bL31 from Synechococcus sp. (strain WH7803).